The sequence spans 1047 residues: FACT complex subunit SPT16 (1047 aa).

Ala2 is modified (N-acetylalanine). Position 139 is an N6-acetyllysine (Lys139). Phosphoserine is present on Ser188. N6-acetyllysine occurs at positions 196 and 223. A coiled-coil region spans residues Leu432–Lys507. Ser455 carries the post-translational modification Phosphoserine. Residues Arg492–Met518 are disordered. Residue Lys497 forms a Glycyl lysine isopeptide (Lys-Gly) (interchain with G-Cter in SUMO2) linkage. Positions Glu499 to Asn514 are enriched in polar residues. The residue at position 508 (Ser508) is a Phosphoserine. Lys513 is subject to N6-acetyllysine; alternate. Lys513 is covalently cross-linked (Glycyl lysine isopeptide (Lys-Gly) (interchain with G-Cter in SUMO2); alternate). Residue Lys647 forms a Glycyl lysine isopeptide (Lys-Gly) (interchain with G-Cter in SUMO2) linkage. Ser650 and Ser658 each carry phosphoserine. An N6-acetyllysine mark is found at Lys732 and Lys786. Residue Thr903 is modified to Phosphothreonine. Lys904 carries the N6-acetyllysine modification. The interval Glu918–Lys1047 is disordered. A compositionally biased stretch (acidic residues) spans Pro927 to Ser973. Phosphoserine occurs at positions 979, 982, 986, and 1015. The segment covering Glu985–Arg1005 has biased composition (basic and acidic residues). The segment covering Val1024–Ser1039 has biased composition (low complexity).

Belongs to the peptidase M24 family. SPT16 subfamily. Interacts with MYOG (via C-terminal region). Component of the FACT complex, a stable heterodimer of SSRP1 and SUPT16H. Also a component of a CK2-SPT16-SSRP1 complex which forms following UV irradiation, composed of SSRP1, SUPT16H, CSNK2A1, CSNK2A2 and CSNK2B. Interacts with NEK9. Binds to histone H2A-H2B. Identified in a centromere complex containing histones H2A, H2B and H4, and at least CENPA, CENPB, CENPC, CENPT, CENPN, HJURP, SUPT16H, SSRP1 and RSF1. Interacts with GTF2E2. As to quaternary structure, (Microbial infection) Interacts with Herpes simplex virus 1 (HHV-1) protein ICP22; this interaction relocalizes the FACT complex to viral genomes in infected cells. In terms of processing, ADP-ribosylated. ADP-ribosylation by PARP1 is induced by genotoxic stress and correlates with dissociation of FACT from chromatin. In terms of tissue distribution, ubiquitous.

Its subcellular location is the nucleus. The protein localises to the chromosome. In terms of biological role, component of the FACT complex, a general chromatin factor that acts to reorganize nucleosomes. The FACT complex is involved in multiple processes that require DNA as a template such as mRNA elongation, DNA replication and DNA repair. During transcription elongation the FACT complex acts as a histone chaperone that both destabilizes and restores nucleosomal structure. It facilitates the passage of RNA polymerase II and transcription by promoting the dissociation of one histone H2A-H2B dimer from the nucleosome, then subsequently promotes the reestablishment of the nucleosome following the passage of RNA polymerase II. The FACT complex is probably also involved in phosphorylation of 'Ser-392' of p53/TP53 via its association with CK2 (casein kinase II). The chain is FACT complex subunit SPT16 (SUPT16H) from Homo sapiens (Human).